A 789-amino-acid chain; its full sequence is MKDKNINSTSFSISKASKAINSYLQLFPEQQWNEVIKITLLFGIDCIQEHFALSTPRIDQLRNIIIHPESSPLDSILTKTPLKNNIINNNQNFNNKINHQHNHNFKYQQDENNNTDDEQEQEQEQQQKQNEIINKITTPIKTPSPPPPPQTSQTSQTSSTSFSIKSNNKTNNNNNNNNNNNNNNNNPFSTITPIHKNHQNSISTSSSKQLRSSLKNTPSKFAFFTSSTSSENNNNNNKNINNGNNNNNNDGGDINRNDSSSNNNNNTHNSTLFIDDDDGDNNDEINDENDINSNNLTFSSSTKSKKINNNNNSIDSNNTNINNNNNNYNNSINKLSGRESKVEFNEDRNQYSIYSRGDTSSSNNSDLIFENNNNNNSSIYNESATQVEIFYDKNGQPINHLYQEFQFQQHQNGDQNNNSQFLDESMLKSNNSSNNNNNNKNNNNNNNNNNNNNNNNNNNSSSNRNSSINNGNNQSSLFYNSASTNQNNNNNNITTSLNYKVISSPLKNLNLNPTTTNEQISKSVNFDRNQNQKSPFLNNTSMPNINFNEQSQQQSQNQYYQQQQQQQQQQSNNSMNQSINYKDINPSFLSSTPLEFNDTVDTSGSSLKYSTSSNNSKGFSNISNNSKKIFDKSNFNLGSMGNSSFGMSNFNSTSFGASTGGASHLTHTFHNNGNSDGDDDQSNNSNSLFYTPRSTHIMNSMNSNFNHHHNNNNQLFNNSGSNKQMGFPIPPNAVPIHNHTHHHYHNGKGNNTDQELEIIDLEDQPTRFNNKNNNNSNGFTSNKRFYNQH.

Disordered regions lie at residues 107–326 (YQQD…NNNN), 426–491 (MLKS…NNNN), 523–625 (SVNF…ISNN), 666–751 (THTF…KGNN), and 765–789 (PTRF…YNQH). Residues 113–123 (NNTDDEQEQEQ) are compositionally biased toward acidic residues. Composition is skewed to low complexity over residues 124-141 (EQQQ…TPIK), 151-194 (TSQT…ITPI), 201-213 (SIST…LRSS), and 225-270 (TSST…THNS). Over residues 274–290 (IDDDDGDNNDEINDEND) the composition is skewed to acidic residues. 2 stretches are compositionally biased toward low complexity: residues 291–326 (INSN…NNNN) and 429–491 (SNNS…NNNN). Positions 523 to 549 (SVNFDRNQNQKSPFLNNTSMPNINFNE) are enriched in polar residues. Composition is skewed to low complexity over residues 550-581 (QSQQ…SINY), 602-617 (TSGS…NNSK), 696-722 (HIMN…SGSN), and 766-789 (TRFN…YNQH).

This is an uncharacterized protein from Dictyostelium discoideum (Social amoeba).